Here is a 492-residue protein sequence, read N- to C-terminus: Endoglucanase 15 (492 aa).

Positions 1-30 are cleaved as a signal peptide; that stretch reads MSCISSQCFITIKSICIVLLLSITCGAVSA. Asp-86 serves as the catalytic Nucleophile. Active-site residues include His-414, Asp-466, and Glu-475.

The protein belongs to the glycosyl hydrolase 9 (cellulase E) family.

The protein resides in the secreted. It catalyses the reaction Endohydrolysis of (1-&gt;4)-beta-D-glucosidic linkages in cellulose, lichenin and cereal beta-D-glucans.. This chain is Endoglucanase 15, found in Arabidopsis thaliana (Mouse-ear cress).